We begin with the raw amino-acid sequence, 447 residues long: Glutamyl-tRNA reductase (447 aa).

Substrate contacts are provided by residues 49–52 (TCNR), Ser109, 114–116 (EQQ), and Gln120. The Nucleophile role is filled by Cys50. Residue 189 to 194 (GAGSMG) coordinates NADP(+).

The protein belongs to the glutamyl-tRNA reductase family. Homodimer.

It carries out the reaction (S)-4-amino-5-oxopentanoate + tRNA(Glu) + NADP(+) = L-glutamyl-tRNA(Glu) + NADPH + H(+). It functions in the pathway porphyrin-containing compound metabolism; protoporphyrin-IX biosynthesis; 5-aminolevulinate from L-glutamyl-tRNA(Glu): step 1/2. Its function is as follows. Catalyzes the NADPH-dependent reduction of glutamyl-tRNA(Glu) to glutamate 1-semialdehyde (GSA). This chain is Glutamyl-tRNA reductase, found in Mycobacterium sp. (strain JLS).